A 202-amino-acid polypeptide reads, in one-letter code: LexA repressor (202 aa).

Residues 28–48 (RAEIASRLGFRSPNAAEEHLK) constitute a DNA-binding region (H-T-H motif). Active-site for autocatalytic cleavage activity residues include Ser-119 and Lys-156.

It belongs to the peptidase S24 family. In terms of assembly, homodimer.

It carries out the reaction Hydrolysis of Ala-|-Gly bond in repressor LexA.. Represses a number of genes involved in the response to DNA damage (SOS response), including recA and lexA. Binds to the 16 bp palindromic sequence 5'-CTGTATATATATACAG-3'. In the presence of single-stranded DNA, RecA interacts with LexA causing an autocatalytic cleavage which disrupts the DNA-binding part of LexA, leading to derepression of the SOS regulon and eventually DNA repair. This chain is LexA repressor, found in Sodalis glossinidius (strain morsitans).